The primary structure comprises 280 residues: Maltodextrin transport system permease protein MalD (280 aa).

A run of 6 helical transmembrane segments spans residues 15 to 35 (LTYLYLIGLSIVIIYPLLITI), 77 to 97 (LIIALITMAVQTSIIVLAGYA), 110 to 130 (LVFFLIIQMVPTMAALTAFFV), 142 to 162 (WFLIFLYVGGGIPMNAWLMKG), 200 to 220 (VQALWAFMGPFGDYILSSFLL), and 244 to 264 (IAYFSAGAILIALPICILFFF). The ABC transmembrane type-1 domain occupies 73–265 (YLNTLIIALI…LPICILFFFL (193 aa)).

The protein belongs to the binding-protein-dependent transport system permease family. MalFG subfamily.

It localises to the cell membrane. In terms of biological role, part of the binding-protein-dependent transport system for maltodextrin; probably responsible for the translocation of the substrate across the membrane. This is Maltodextrin transport system permease protein MalD (malD) from Streptococcus pneumoniae (strain ATCC BAA-255 / R6).